The chain runs to 266 residues: Cell division protein FtsQ (266 aa).

Residues 1 to 31 (MRQKTSSNKKKQKNTNNISLRRKLGLMYKKA) lie on the Cytoplasmic side of the membrane. A helical membrane pass occupies residues 32–52 (ILGLKIVLMIFVCLFVFTKYF). Topologically, residues 53–266 (TSIKTYLITN…DRNKYYIQKY (214 aa)) are periplasmic. Residues 72–140 (FRLENVIIEG…NTVYIKLFER (69 aa)) enclose the POTRA domain.

The protein belongs to the FtsQ/DivIB family. FtsQ subfamily.

It localises to the cell inner membrane. Essential cell division protein. The polypeptide is Cell division protein FtsQ (Rickettsia typhi (strain ATCC VR-144 / Wilmington)).